The following is a 973-amino-acid chain: UvrABC system protein A (973 aa).

34 to 41 (GLSGSGKS) contacts ATP. ABC transporter domains are found at residues 331–609 (WAKS…PKSL) and 629–958 (PKKG…HFLK). 662–669 (GVSGGGKS) is an ATP binding site. The C4-type zinc-finger motif lies at 761-787 (CEACQGDGVIKIEMHFLPDVYVTCDVC).

This sequence belongs to the ABC transporter superfamily. UvrA family. Forms a heterotetramer with UvrB during the search for lesions.

The protein localises to the cytoplasm. Functionally, the UvrABC repair system catalyzes the recognition and processing of DNA lesions. UvrA is an ATPase and a DNA-binding protein. A damage recognition complex composed of 2 UvrA and 2 UvrB subunits scans DNA for abnormalities. When the presence of a lesion has been verified by UvrB, the UvrA molecules dissociate. The sequence is that of UvrABC system protein A from Agrobacterium fabrum (strain C58 / ATCC 33970) (Agrobacterium tumefaciens (strain C58)).